A 175-amino-acid chain; its full sequence is Thioredoxin-like protein CITRX, chloroplastic (175 aa).

A chloroplast-targeting transit peptide spans 1-64; the sequence is MQAASLAFHP…KPPAVGKYVR (64 aa). The Thioredoxin domain occupies 74-175; that stretch reads AKEIQELIKG…MMRDIIDNDL (102 aa). Residues C98 and C101 each act as nucleophile in the active site. A disulfide bond links C98 and C101.

This sequence belongs to the thioredoxin family. Plant CITRX-type subfamily. Interacts with Cf-9 resistance protein.

The protein localises to the plastid. The protein resides in the chloroplast. Its function is as follows. Probable thiol-disulfide oxidoreductase that may play a role in proper chloroplast development. The polypeptide is Thioredoxin-like protein CITRX, chloroplastic (Solanum lycopersicum (Tomato)).